A 235-amino-acid chain; its full sequence is Purine nucleoside phosphorylase DeoD-type (235 aa).

His4 contributes to the a purine D-ribonucleoside binding site. Residues Gly20, Arg24, Arg43, and 87–90 contribute to the phosphate site; that span reads RVGT. Residues Glu162, 179-181, and 203-204 each bind a purine D-ribonucleoside; these read EME and SD. Asp204 (proton donor) is an active-site residue.

Belongs to the PNP/UDP phosphorylase family. Homohexamer; trimer of homodimers.

It carries out the reaction a purine D-ribonucleoside + phosphate = a purine nucleobase + alpha-D-ribose 1-phosphate. It catalyses the reaction a purine 2'-deoxy-D-ribonucleoside + phosphate = a purine nucleobase + 2-deoxy-alpha-D-ribose 1-phosphate. In terms of biological role, catalyzes the reversible phosphorolytic breakdown of the N-glycosidic bond in the beta-(deoxy)ribonucleoside molecules, with the formation of the corresponding free purine bases and pentose-1-phosphate. In Bacillus anthracis (strain CDC 684 / NRRL 3495), this protein is Purine nucleoside phosphorylase DeoD-type.